The primary structure comprises 151 residues: MD-2-related lipid-recognition protein (151 aa).

The signal sequence occupies residues Met1–Ala18. Cystine bridges form between Cys27-Cys141, Cys45-Cys51, and Cys95-Cys100. An N-linked (GlcNAc...) asparagine glycan is attached at Asn58.

N-glycosylated. In terms of tissue distribution, hemolymph (at protein level). Constitutively expressed mainly in fat body and also in hemocytes and secreted into hemolymph. Not detected in midgut, epidermis, or Malpighian tubule of naive larvae.

It localises to the secreted. Binds to lipopolysaccharide from a variety of Gram-negative bacteria and to lipid A. The chain is MD-2-related lipid-recognition protein from Manduca sexta (Tobacco hawkmoth).